The sequence spans 412 residues: Tyrosine--tRNA ligase (412 aa).

Tyrosine 41 provides a ligand contact to L-tyrosine. The 'HIGH' region motif lies at 46-55 (ATADSLHVGH). The L-tyrosine site is built by tyrosine 174 and glutamine 178. The 'KMSKS' region signature appears at 234–238 (KMGKS). ATP is bound at residue lysine 237. Residues 348-411 (LSLTDLLLEH…KKQHLHLRLE (64 aa)) form the S4 RNA-binding domain.

This sequence belongs to the class-I aminoacyl-tRNA synthetase family. TyrS type 1 subfamily. Homodimer.

It is found in the cytoplasm. The catalysed reaction is tRNA(Tyr) + L-tyrosine + ATP = L-tyrosyl-tRNA(Tyr) + AMP + diphosphate + H(+). In terms of biological role, catalyzes the attachment of tyrosine to tRNA(Tyr) in a two-step reaction: tyrosine is first activated by ATP to form Tyr-AMP and then transferred to the acceptor end of tRNA(Tyr). This is Tyrosine--tRNA ligase from Pseudomonas aeruginosa (strain LESB58).